A 104-amino-acid polypeptide reads, in one-letter code: Flagellar hook-basal body complex protein FliE (104 aa).

The protein belongs to the FliE family.

It is found in the bacterial flagellum basal body. The chain is Flagellar hook-basal body complex protein FliE from Salmonella arizonae (strain ATCC BAA-731 / CDC346-86 / RSK2980).